A 1147-amino-acid chain; its full sequence is Nucleolar protein 6 (1147 aa).

The disordered stretch occupies residues 1–49 (MQKKRSRAGAAEQEAASDDGEMSDSSDKMEVSQNKGKSGIKRAPEADDV). Residues 15–24 (AASDDGEMSD) are compositionally biased toward acidic residues.

It belongs to the NRAP family. As to quaternary structure, part of the small subunit (SSU) processome, composed of more than 70 proteins and the RNA chaperone small nucleolar RNA (snoRNA) U3.

Its subcellular location is the nucleus. The protein resides in the nucleolus. It localises to the chromosome. Part of the small subunit (SSU) processome, first precursor of the small eukaryotic ribosomal subunit. During the assembly of the SSU processome in the nucleolus, many ribosome biogenesis factors, an RNA chaperone and ribosomal proteins associate with the nascent pre-rRNA and work in concert to generate RNA folding, modifications, rearrangements and cleavage as well as targeted degradation of pre-ribosomal RNA by the RNA exosome. In Xenopus laevis (African clawed frog), this protein is Nucleolar protein 6 (nol6).